An 82-amino-acid chain; its full sequence is Small ribosomal subunit protein bS16 (82 aa).

The protein belongs to the bacterial ribosomal protein bS16 family.

The chain is Small ribosomal subunit protein bS16 from Methylobacillus flagellatus (strain ATCC 51484 / DSM 6875 / VKM B-1610 / KT).